We begin with the raw amino-acid sequence, 93 residues long: U12-lycotoxin-Ls1a (93 aa).

The N-terminal stretch at 1 to 18 is a signal peptide; that stretch reads MKFAVILLFSLVVLAVAS. Residues 19-38 constitute a propeptide that is removed on maturation; sequence ESVEEVRREIDIEDLPEQQR.

The protein belongs to the neurotoxin 31 family. Post-translationally, contains 5 disulfide bonds. In terms of tissue distribution, expressed by the venom gland.

The protein localises to the secreted. The chain is U12-lycotoxin-Ls1a from Lycosa singoriensis (Wolf spider).